A 394-amino-acid chain; its full sequence is Elongation factor Tu (394 aa).

The region spanning 10–204 (KPHVNVGTIG…ALDTYIPEPE (195 aa)) is the tr-type G domain. Residues 19–26 (GHVDHGKT) form a G1 region. 19 to 26 (GHVDHGKT) provides a ligand contact to GTP. A Mg(2+)-binding site is contributed by Thr26. The tract at residues 60–64 (GITIN) is G2. Positions 81-84 (DCPG) are G3. Residues 81–85 (DCPGH) and 136–139 (NKCD) contribute to the GTP site. Residues 136-139 (NKCD) form a G4 region. Residues 174–176 (SAL) form a G5 region.

The protein belongs to the TRAFAC class translation factor GTPase superfamily. Classic translation factor GTPase family. EF-Tu/EF-1A subfamily. In terms of assembly, monomer.

The protein localises to the cytoplasm. The catalysed reaction is GTP + H2O = GDP + phosphate + H(+). Functionally, GTP hydrolase that promotes the GTP-dependent binding of aminoacyl-tRNA to the A-site of ribosomes during protein biosynthesis. This chain is Elongation factor Tu, found in Shewanella pealeana (strain ATCC 700345 / ANG-SQ1).